A 477-amino-acid polypeptide reads, in one-letter code: Endo-1,4-beta-xylanase A (477 aa).

Positions 1–41 are cleaved as a signal peptide; that stretch reads MGSYALPRSGVRRSIRVLLLALVVGVLGTATALIAPPGAHA. The GH10 domain occupies 42–340; that stretch reads AESTLGAAAA…KAAYTAVLDA (299 aa). Glutamate 169 functions as the Proton donor in the catalytic mechanism. The Nucleophile role is filled by glutamate 277. A Ricin B-type lectin domain is found at 361 to 477; that stretch reads SGRCLDVPDA…NGSNQRWTRT (117 aa). 3 disulfides stabilise this stretch: cysteine 364/cysteine 383, cysteine 406/cysteine 423, and cysteine 447/cysteine 466.

Belongs to the glycosyl hydrolase 10 (cellulase F) family.

It localises to the secreted. It carries out the reaction Endohydrolysis of (1-&gt;4)-beta-D-xylosidic linkages in xylans.. It functions in the pathway glycan degradation; xylan degradation. Its function is as follows. Contributes to hydrolyze hemicellulose, the major component of plant cell-walls. XLNA and XLNB seem to act sequentially on the substrate to yield xylobiose and xylose as carbon sources. The polypeptide is Endo-1,4-beta-xylanase A (xlnA) (Streptomyces lividans).